A 243-amino-acid chain; its full sequence is Ubiquinone/menaquinone biosynthesis C-methyltransferase UbiE (243 aa).

Residues Thr69, Asp90, and 116–117 each bind S-adenosyl-L-methionine; that span reads DA.

It belongs to the class I-like SAM-binding methyltransferase superfamily. MenG/UbiE family.

The enzyme catalyses a 2-demethylmenaquinol + S-adenosyl-L-methionine = a menaquinol + S-adenosyl-L-homocysteine + H(+). It catalyses the reaction a 2-methoxy-6-(all-trans-polyprenyl)benzene-1,4-diol + S-adenosyl-L-methionine = a 5-methoxy-2-methyl-3-(all-trans-polyprenyl)benzene-1,4-diol + S-adenosyl-L-homocysteine + H(+). Its pathway is quinol/quinone metabolism; menaquinone biosynthesis; menaquinol from 1,4-dihydroxy-2-naphthoate: step 2/2. It functions in the pathway cofactor biosynthesis; ubiquinone biosynthesis. In terms of biological role, methyltransferase required for the conversion of demethylmenaquinol (DMKH2) to menaquinol (MKH2) and the conversion of 2-polyprenyl-6-methoxy-1,4-benzoquinol (DDMQH2) to 2-polyprenyl-3-methyl-6-methoxy-1,4-benzoquinol (DMQH2). The sequence is that of Ubiquinone/menaquinone biosynthesis C-methyltransferase UbiE from Ralstonia pickettii (strain 12J).